The following is a 311-amino-acid chain: tRNA dimethylallyltransferase (311 aa).

An ATP-binding site is contributed by 11 to 18 (GPTASGKS). 13–18 (TASGKS) is a binding site for substrate. Interaction with substrate tRNA stretches follow at residues 36–39 (DSMQ) and 160–164 (QRLIR).

It belongs to the IPP transferase family. As to quaternary structure, monomer. The cofactor is Mg(2+).

The enzyme catalyses adenosine(37) in tRNA + dimethylallyl diphosphate = N(6)-dimethylallyladenosine(37) in tRNA + diphosphate. Catalyzes the transfer of a dimethylallyl group onto the adenine at position 37 in tRNAs that read codons beginning with uridine, leading to the formation of N6-(dimethylallyl)adenosine (i(6)A). This chain is tRNA dimethylallyltransferase, found in Rickettsia prowazekii (strain Madrid E).